Consider the following 185-residue polypeptide: Ribosome-recycling factor (185 aa).

This sequence belongs to the RRF family.

It localises to the cytoplasm. In terms of biological role, responsible for the release of ribosomes from messenger RNA at the termination of protein biosynthesis. May increase the efficiency of translation by recycling ribosomes from one round of translation to another. This Streptococcus mutans serotype c (strain ATCC 700610 / UA159) protein is Ribosome-recycling factor.